Consider the following 177-residue polypeptide: FCS-Like Zinc finger 1 (177 aa).

A compositionally biased stretch (low complexity) spans 22-46 (SLSEMEAGFSGNNNNSNNHGNPQNG). Disordered stretches follow at residues 22–49 (SLSEMEAGFSGNNNNSNNHGNPQNGVVS) and 134–177 (ERDE…VAAA). The FLZ-type zinc finger occupies 96–140 (HFLDSCFLCKKPLGDNRDIYMYRGDTPFCSEECRQEQIERDEAKE). 2 stretches are compositionally biased toward basic and acidic residues: residues 134–143 (ERDEAKEKKQ) and 154–168 (RRKEQSSPTRSRDYA).

This sequence belongs to the FLZ family. As to quaternary structure, interacts with KIN10 and KIN11 via its FLZ-type zinc finger domain. Interacts with KINB1, KINB2 and KINB3 via its N-terminal part. Interacts with DSP3 and BBX21 via its FLZ-type zinc finger domain. Forms heterodimer with FLZ7 and FLZ15 in vitro.

It is found in the nucleus. The protein localises to the cytoplasm. Functionally, may act as an adapter to facilitate the interaction of SnRK1 complex with effector proteins, conferring tissue- and stimulus-type specific differences in the SnRK1 regulation pathway. The chain is FCS-Like Zinc finger 1 from Arabidopsis thaliana (Mouse-ear cress).